The primary structure comprises 339 residues: Deubiquitinase and deneddylase Dub2 (339 aa).

The helical transmembrane segment at 36-56 (IIIALFLIVISCGLILCAYTF) threads the bilayer. Active-site residues include H203, D220, and C282.

Belongs to the peptidase C48 family.

It is found in the secreted. The protein localises to the host cell. It localises to the membrane. Its function is as follows. Effector proteins function to alter host cell physiology and promote bacterial survival in host tissues. This protease possesses deubiquitinating and deneddylating activities. In Chlamydia trachomatis serovar D (strain ATCC VR-885 / DSM 19411 / UW-3/Cx), this protein is Deubiquitinase and deneddylase Dub2 (cdu2).